The primary structure comprises 476 residues: Glutamate--tRNA ligase (476 aa).

The 'HIGH' region motif lies at proline 9–threonine 19. Residues lysine 248 to arginine 252 carry the 'KMSKS' region motif. Lysine 251 serves as a coordination point for ATP.

This sequence belongs to the class-I aminoacyl-tRNA synthetase family. Glutamate--tRNA ligase type 1 subfamily. In terms of assembly, monomer.

The protein localises to the cytoplasm. The enzyme catalyses tRNA(Glu) + L-glutamate + ATP = L-glutamyl-tRNA(Glu) + AMP + diphosphate. Functionally, catalyzes the attachment of glutamate to tRNA(Glu) in a two-step reaction: glutamate is first activated by ATP to form Glu-AMP and then transferred to the acceptor end of tRNA(Glu). The sequence is that of Glutamate--tRNA ligase from Prochlorococcus marinus (strain AS9601).